The primary structure comprises 244 residues: Phosphoadenosine 5'-phosphosulfate reductase (244 aa).

Cys-239 (nucleophile; cysteine thiosulfonate intermediate) is an active-site residue.

It belongs to the PAPS reductase family. CysH subfamily.

It is found in the cytoplasm. It catalyses the reaction [thioredoxin]-disulfide + sulfite + adenosine 3',5'-bisphosphate + 2 H(+) = [thioredoxin]-dithiol + 3'-phosphoadenylyl sulfate. Its pathway is sulfur metabolism; hydrogen sulfide biosynthesis; sulfite from sulfate: step 3/3. Its function is as follows. Catalyzes the formation of sulfite from phosphoadenosine 5'-phosphosulfate (PAPS) using thioredoxin as an electron donor. The polypeptide is Phosphoadenosine 5'-phosphosulfate reductase (Salmonella arizonae (strain ATCC BAA-731 / CDC346-86 / RSK2980)).